We begin with the raw amino-acid sequence, 588 residues long: Aspartate--tRNA ligase (588 aa).

An L-aspartate-binding site is contributed by glutamate 174. The interval 198–201 (QLFK) is aspartate. Arginine 220 lines the L-aspartate pocket. ATP-binding positions include 220-222 (RDE) and glutamine 229. Histidine 448 contributes to the L-aspartate binding site. Residue glutamate 482 coordinates ATP. Arginine 489 provides a ligand contact to L-aspartate. An ATP-binding site is contributed by 534 to 537 (GIDR).

It belongs to the class-II aminoacyl-tRNA synthetase family. Type 1 subfamily. In terms of assembly, homodimer.

The protein localises to the cytoplasm. It carries out the reaction tRNA(Asp) + L-aspartate + ATP = L-aspartyl-tRNA(Asp) + AMP + diphosphate. Its function is as follows. Catalyzes the attachment of L-aspartate to tRNA(Asp) in a two-step reaction: L-aspartate is first activated by ATP to form Asp-AMP and then transferred to the acceptor end of tRNA(Asp). This Xanthomonas campestris pv. campestris (strain B100) protein is Aspartate--tRNA ligase.